A 446-amino-acid polypeptide reads, in one-letter code: RUN domain-containing protein 3A (446 aa).

The segment at methionine 1 to alanine 298 is interaction with RAP2A. Residues aspartate 52 to glutamate 189 enclose the RUN domain. Phosphothreonine is present on threonine 215. The tract at residues aspartate 216–proline 239 is disordered. Serine 232 carries the post-translational modification Phosphoserine. Residues tyrosine 267–isoleucine 322 adopt a coiled-coil conformation. The segment covering proline 372–glutamine 384 has biased composition (polar residues). Residues proline 372 to threonine 404 are disordered. 2 positions are modified to phosphoserine: serine 416 and serine 419.

The protein belongs to the RUNDC3 family. As to quaternary structure, interacts with the GTP-bound form of RAP2A.

May act as an effector of RAP2A in neuronal cells. This chain is RUN domain-containing protein 3A (RUNDC3A), found in Homo sapiens (Human).